Consider the following 245-residue polypeptide: Glutathione S-transferase T1 (245 aa).

Residues 2–83 (MKLKVYADRM…YLSSAFPSVA (82 aa)) enclose the GST N-terminal domain. Residues 12–13 (SQ), 41–42 (QL), 54–55 (KV), and 67–68 (ES) each bind glutathione. The GST C-terminal domain maps to 90 to 233 (DLSKRAKIHS…KEGFQKRREM (144 aa)). Positions 243-245 (SKI) match the Microbody targeting signal motif.

It belongs to the GST superfamily. Theta family.

It localises to the nucleus. It is found in the peroxisome. It catalyses the reaction RX + glutathione = an S-substituted glutathione + a halide anion + H(+). In vitro, possesses glutathione S-transferase activity toward 1-chloro-2,4-dinitrobenzene (CDNB) and p-nitrobenzyl chloride (pNBC), and glutathione peroxidase activity toward cumene hydroperoxide and linoleic acid-13-hydroperoxide. May be involved in the conjugation of reduced glutathione to a wide number of exogenous and endogenous hydrophobic electrophiles and have a detoxification role against certain herbicides. This is Glutathione S-transferase T1 (GSTT1) from Arabidopsis thaliana (Mouse-ear cress).